A 142-amino-acid chain; its full sequence is Large ribosomal subunit protein uL13 (142 aa).

This sequence belongs to the universal ribosomal protein uL13 family. As to quaternary structure, part of the 50S ribosomal subunit.

This protein is one of the early assembly proteins of the 50S ribosomal subunit, although it is not seen to bind rRNA by itself. It is important during the early stages of 50S assembly. This is Large ribosomal subunit protein uL13 from Helicobacter hepaticus (strain ATCC 51449 / 3B1).